A 167-amino-acid polypeptide reads, in one-letter code: Peptide deformylase (167 aa).

2 residues coordinate Fe cation: Cys-90 and His-132. Glu-133 is a catalytic residue. His-136 is a Fe cation binding site.

This sequence belongs to the polypeptide deformylase family. Requires Fe(2+) as cofactor.

The enzyme catalyses N-terminal N-formyl-L-methionyl-[peptide] + H2O = N-terminal L-methionyl-[peptide] + formate. In terms of biological role, removes the formyl group from the N-terminal Met of newly synthesized proteins. Requires at least a dipeptide for an efficient rate of reaction. N-terminal L-methionine is a prerequisite for activity but the enzyme has broad specificity at other positions. This chain is Peptide deformylase, found in Dehalococcoides mccartyi (strain CBDB1).